The chain runs to 1520 residues: Glutamate synthase [NADPH] large chain (1520 aa).

The active-site For GATase activity is cysteine 22. A Glutamine amidotransferase type-2 domain is found at 22-415 (CGIGLYAHLK…PGKMLLIDLE (394 aa)). Residues 890 to 913 (GGKSNSGEGGEDPKRFVPDENGDD) are disordered. Residues 900–913 (EDPKRFVPDENGDD) are compositionally biased toward basic and acidic residues. 1060–1112 (LAEAHQTLMLNGLRDRVVLETDGKLMTGRDVVMAALLGAEEFGFATAPLVVLG) serves as a coordination point for FMN. Positions 1113, 1119, and 1124 each coordinate [3Fe-4S] cluster.

It belongs to the glutamate synthase family. In terms of assembly, aggregate of 4 catalytic active heterodimers, consisting of a large and a small subunit. It depends on [3Fe-4S] cluster as a cofactor. The cofactor is FAD. FMN serves as cofactor.

It catalyses the reaction 2 L-glutamate + NADP(+) = L-glutamine + 2-oxoglutarate + NADPH + H(+). The protein operates within amino-acid biosynthesis; L-glutamate biosynthesis via GLT pathway; L-glutamate from 2-oxoglutarate and L-glutamine (NADP(+) route): step 1/1. It participates in energy metabolism; nitrogen metabolism. In Bacillus subtilis (strain 168), this protein is Glutamate synthase [NADPH] large chain (gltA).